A 304-amino-acid polypeptide reads, in one-letter code: Homoserine kinase (304 aa).

90–100 contributes to the ATP binding site; that stretch reads PLARGLGSSAS.

Belongs to the GHMP kinase family. Homoserine kinase subfamily.

Its subcellular location is the cytoplasm. The enzyme catalyses L-homoserine + ATP = O-phospho-L-homoserine + ADP + H(+). The protein operates within amino-acid biosynthesis; L-threonine biosynthesis; L-threonine from L-aspartate: step 4/5. In terms of biological role, catalyzes the ATP-dependent phosphorylation of L-homoserine to L-homoserine phosphate. In Staphylococcus aureus (strain bovine RF122 / ET3-1), this protein is Homoserine kinase.